Here is a 67-residue protein sequence, read N- to C-terminus: Conotoxin Cl14c (67 aa).

A signal peptide spans 1-20 (MNVTVMFLVLLLLTMPLTDG). Residues 21-48 (FNIRATNGGELFGPVQRDAGNVLDHGFQ) constitute a propeptide that is removed on maturation.

The protein belongs to the conotoxin L superfamily. Post-translationally, contains 2 disulfide bonds. In terms of tissue distribution, expressed by the venom duct.

The protein localises to the secreted. In Californiconus californicus (California cone), this protein is Conotoxin Cl14c.